The chain runs to 199 residues: Protein-methionine-sulfoxide reductase heme-binding subunit MsrQ (199 aa).

4 consecutive transmembrane segments (helical) span residues 10–30 (WLKV…FWAI), 82–102 (LWCF…ELGI), 116–136 (PYLT…LTST), and 153–173 (VVYL…KILS).

It belongs to the MsrQ family. In terms of assembly, heterodimer of a catalytic subunit (MsrP) and a heme-binding subunit (MsrQ). Requires FMN as cofactor. It depends on heme b as a cofactor.

The protein resides in the cell inner membrane. In terms of biological role, part of the MsrPQ system that repairs oxidized periplasmic proteins containing methionine sulfoxide residues (Met-O), using respiratory chain electrons. Thus protects these proteins from oxidative-stress damage caused by reactive species of oxygen and chlorine generated by the host defense mechanisms. MsrPQ is essential for the maintenance of envelope integrity under bleach stress, rescuing a wide series of structurally unrelated periplasmic proteins from methionine oxidation, including the primary periplasmic chaperone SurA and the lipoprotein Pal. MsrQ provides electrons for reduction to the reductase catalytic subunit MsrP, using the quinone pool of the respiratory chain. In Salmonella newport (strain SL254), this protein is Protein-methionine-sulfoxide reductase heme-binding subunit MsrQ.